Reading from the N-terminus, the 446-residue chain is Argininosuccinate synthase (446 aa).

Residues 17–25 and A43 each bind ATP; that span reads AFSGGLDTS. Y99 is a binding site for L-citrulline. Residues G129 and T131 each contribute to the ATP site. L-aspartate contacts are provided by T131, N135, and D136. Position 135 (N135) interacts with L-citrulline. Residue D136 coordinates ATP. L-citrulline is bound by residues R139 and S192. D194 contributes to the ATP binding site. The L-citrulline site is built by T201, E203, and E280.

Belongs to the argininosuccinate synthase family. Type 2 subfamily. Homotetramer.

Its subcellular location is the cytoplasm. It carries out the reaction L-citrulline + L-aspartate + ATP = 2-(N(omega)-L-arginino)succinate + AMP + diphosphate + H(+). It participates in amino-acid biosynthesis; L-arginine biosynthesis; L-arginine from L-ornithine and carbamoyl phosphate: step 2/3. In Variovorax paradoxus (strain S110), this protein is Argininosuccinate synthase.